A 442-amino-acid chain; its full sequence is Septin-8 (442 aa).

Residues 1-16 (MAATDLERVSSAEPEP) show a composition bias toward basic and acidic residues. The tract at residues 1 to 23 (MAATDLERVSSAEPEPRSLSLGG) is disordered. A2 bears the N-acetylalanine mark. A Phosphoserine modification is found at S10. Residues 41–307 (QGFSFNILCV…ELYRRCKLEE (267 aa)) form the Septin-type G domain. Positions 51–58 (GETGIGKS) are G1 motif. GTP is bound by residues 51–58 (GETGIGKS), G106, 187–195 (KADTISKSE), G241, and R256. The interval 103–106 (DAVG) is G3 motif. The tract at residues 186–189 (AKAD) is G4 motif. The stretch at 322–410 (LQETYEAKRK…RKAAVEALQS (89 aa)) forms a coiled coil. Residues 377 to 391 (HQEEKRKVEEKRREL) are compositionally biased toward basic and acidic residues. Positions 377–442 (HQEEKRKVEE…WSSIYSVTIP (66 aa)) are disordered. Polar residues-rich tracts occupy residues 408–420 (LQSQALHATSQQP) and 432–442 (GWSSIYSVTIP).

This sequence belongs to the TRAFAC class TrmE-Era-EngA-EngB-Septin-like GTPase superfamily. Septin GTPase family. In terms of assembly, septins polymerize into heterooligomeric protein complexes that form filaments, and can associate with cellular membranes, actin filaments and microtubules. GTPase activity is required for filament formation. Interacts with CDK14, SEPTIN4, SEPTIN5 and SEPTIN7. Interacts with VAMP2; the interaction inhibits interaction of VAMP2 with SYP. Interacts with STX1A.

The protein resides in the cytoplasm. Its subcellular location is the cytoskeleton. The protein localises to the synapse. It is found in the cell projection. It localises to the axon. The protein resides in the cytoplasmic vesicle. Its subcellular location is the secretory vesicle. The protein localises to the synaptic vesicle membrane. It is found in the presynapse. In terms of biological role, filament-forming cytoskeletal GTPase. May play a role in platelet secretion. Seems to participate in the process of SNARE complex formation in synaptic vesicles. The polypeptide is Septin-8 (Otolemur garnettii (Small-eared galago)).